Reading from the N-terminus, the 304-residue chain is Retrotransposon Gag-like protein 4 (304 aa).

The segment at 276-293 (QLCVYCNQAGHFTRDCLA) adopts a CCHC-type zinc-finger fold.

In terms of tissue distribution, in adults, expressed in brain, eye, kidney, ovary and testis. Weakly expressed in thymus, heart and muscle.

Involved in cognitive function in the brain, possibly via the noradrenergic system. The sequence is that of Retrotransposon Gag-like protein 4 from Mus musculus (Mouse).